We begin with the raw amino-acid sequence, 402 residues long: Oxysterol-binding protein 12 (402 aa).

The disordered stretch occupies residues 333-366; the sequence is NNNNDKETAEEKAKIEEKQRKEESERREKGILWE. A compositionally biased stretch (basic and acidic residues) spans 336 to 366; the sequence is NDKETAEEKAKIEEKQRKEESERREKGILWE.

It belongs to the OSBP family.

This chain is Oxysterol-binding protein 12 (osbL), found in Dictyostelium discoideum (Social amoeba).